A 467-amino-acid chain; its full sequence is Solute carrier family 52, riboflavin transporter, member 3 (467 aa).

Over 1–2 (MA) the chain is Cytoplasmic. The helical transmembrane segment at 3-23 (FLIHLLVCTFGMGSWVAINGL) threads the bilayer. Topologically, residues 24 to 43 (WVELPLLVTELPEGWYLPSY) are extracellular. The helical transmembrane segment at 44-64 (LTVIIQLANVGPLLVTLLHHF) threads the bilayer. Residues 65 to 71 (RPGCLSE) are Cytoplasmic-facing. Residues 72–92 (VAVVFTVLGVGTIACTLFAFL) traverse the membrane as a helical segment. The Extracellular segment spans residues 93–105 (WNVTSWVLGSRHS). Asparagine 94 carries N-linked (GlcNAc...) asparagine glycosylation. The helical transmembrane segment at 106 to 126 (IAFLVLTFFLALVDCTSSVTF) threads the bilayer. Residues 127 to 137 (LPFMSRLPTYY) lie on the Cytoplasmic side of the membrane. The chain crosses the membrane as a helical span at residues 138-158 (LTTFFVGEGLSGLLPALVALA). Residues 159–220 (QGSGLTTCVN…SRYLPANFSP (62 aa)) lie on the Extracellular side of the membrane. Asparagine 168 carries N-linked (GlcNAc...) asparagine glycosylation. Residues 221–241 (LVFFLLLSFMMACCFISFFFL) traverse the membrane as a helical segment. Residues 242–294 (QRQPKRWEASIEDLLTSQVTLNSIRPQEGKDLGPPEESGKAQDPPEEKTAPQH) are Cytoplasmic-facing. Serine 251 is subject to Phosphoserine. Positions 266 to 288 (RPQEGKDLGPPEESGKAQDPPEE) are disordered. The segment covering 268–288 (QEGKDLGPPEESGKAQDPPEE) has biased composition (basic and acidic residues). A helical transmembrane segment spans residues 295-315 (LAHLTFIYVLVAFVNALTNGV). Residues 316 to 333 (LPSVQTYSCLSYGPVAYH) lie on the Extracellular side of the membrane. A helical membrane pass occupies residues 334-354 (LSATLSSMASPLTCFLSIFLP). At 355–359 (NRSLP) the chain is on the cytoplasmic side. The chain crosses the membrane as a helical span at residues 360 to 380 (FLGVLAVLGTSFGAYNMAMAV). Residues 381-394 (MSPCPFMQGHWGGE) lie on the Extracellular side of the membrane. The helical transmembrane segment at 395 to 415 (VLIVVSWVLFTGCLSYVKVML) threads the bilayer. The Cytoplasmic portion of the chain corresponds to 416-425 (GVILRDHSRS). The chain crosses the membrane as a helical span at residues 426–446 (ALLWCGAAVQLGSLLGAVVMF). The Extracellular portion of the chain corresponds to 447–467 (PLVNVLRLFSSADFCSLQCSA).

It belongs to the riboflavin transporter family.

It localises to the cell membrane. It catalyses the reaction riboflavin(in) = riboflavin(out). Its function is as follows. Plasma membrane transporter mediating the uptake by cells of the water soluble vitamin B2/riboflavin that plays a key role in biochemical oxidation-reduction reactions of the carbohydrate, lipid, and amino acid metabolism. In Bos taurus (Bovine), this protein is Solute carrier family 52, riboflavin transporter, member 3 (SLC52A3).